The sequence spans 818 residues: IQ and AAA domain-containing protein 1-like (818 aa).

One can recognise an IQ domain in the interval glutamine 206 to glutamate 235. 2 disordered regions span residues glutamine 344 to glycine 377 and glutamate 458 to threonine 482. The segment covering arginine 463–lysine 476 has biased composition (basic residues). Glycine 567–lysine 574 contacts ATP. Residues serine 795–lysine 818 form a disordered region. The segment covering histidine 798 to lysine 818 has biased composition (basic and acidic residues).

The protein belongs to the AAA ATPase family.

This Homo sapiens (Human) protein is IQ and AAA domain-containing protein 1-like (IQCA1L).